The sequence spans 553 residues: MRKIQAKKGLSIECKGWEQEAVLRMLYNNLDPEVAERPEDLVVYGGIGKAARNWEAFEAIEKTLRELESDETMLVQSGKPVAVFKTHEEAPRVLISNSVLVPEWANWDHFNELDKKGLIMYGQMTAGSWIYIGSQGIVQGTYETFAELGNQHFNGDLAGTVTLTAGLGGMGGAQPLAITMNHGVAICVDVDETRVDKRIDTKYCDVKTADLDEALKLAEEAKERGEGLSIGLVGNAVDIHQAILEKGFKIDIITDQTSAHDPLNGYVPQGYSVEEAKVLREKDPKKYVELSQASMAKHVELMLEFQKRGAVAFDYGNNIRQVAFNNGVKNAFDFPGFVPAYIRPLFCEGKGQFRFAALSGDPKDIERADEEMRKLFPENEKLLRWLDLAEEKISYQGLPSRIAWLGYGERAKMGLALNRLVRDGEISAPIVIGRDHLDAGSVASPNRETESMKDGSDAVGDWAVLNALINTAAGGSWISFHHGGGVGMGYSLHAGMVVVADGSERAERRLERVLTTDPGMGVARHVDAGYDIAIQTAKEKGIHIPMIDKAGDK.

NAD(+) is bound by residues 45-46, Q123, 169-171, D189, R194, 235-236, 256-260, 266-267, Y315, and G485; these read GG, GMG, NA, QTSAH, and YV.

This sequence belongs to the urocanase family. The cofactor is NAD(+).

The protein resides in the cytoplasm. It catalyses the reaction 4-imidazolone-5-propanoate = trans-urocanate + H2O. Its pathway is amino-acid degradation; L-histidine degradation into L-glutamate; N-formimidoyl-L-glutamate from L-histidine: step 2/3. Its function is as follows. Catalyzes the conversion of urocanate to 4-imidazolone-5-propionate. This is Urocanate hydratase from Staphylococcus aureus (strain Mu50 / ATCC 700699).